A 357-amino-acid polypeptide reads, in one-letter code: Homoserine O-acetyltransferase (357 aa).

The AB hydrolase-1 domain occupies 51–340; that stretch reads NVIVICHALT…EPYGHDAFLI (290 aa). Residue S147 is the Nucleophile of the active site. R216 contacts substrate. Catalysis depends on residues D306 and H335. Substrate is bound at residue D336.

It belongs to the AB hydrolase superfamily. MetX family. In terms of assembly, homodimer.

It is found in the cytoplasm. The catalysed reaction is L-homoserine + acetyl-CoA = O-acetyl-L-homoserine + CoA. The protein operates within amino-acid biosynthesis; L-methionine biosynthesis via de novo pathway; O-acetyl-L-homoserine from L-homoserine: step 1/1. Transfers an acetyl group from acetyl-CoA to L-homoserine, forming acetyl-L-homoserine. This is Homoserine O-acetyltransferase from Chlorobium chlorochromatii (strain CaD3).